The following is a 497-amino-acid chain: Serine hydroxymethyltransferase (497 aa).

(6S)-5,6,7,8-tetrahydrofolate is bound by residues Leu-176 and 180-182; that span reads GHL. Lys-289 is modified (N6-(pyridoxal phosphate)lysine). Position 306 (Glu-306) interacts with (6S)-5,6,7,8-tetrahydrofolate.

Belongs to the SHMT family. Homodimer. Requires pyridoxal 5'-phosphate as cofactor.

It is found in the cytoplasm. It catalyses the reaction (6R)-5,10-methylene-5,6,7,8-tetrahydrofolate + glycine + H2O = (6S)-5,6,7,8-tetrahydrofolate + L-serine. It functions in the pathway one-carbon metabolism; tetrahydrofolate interconversion. The protein operates within amino-acid biosynthesis; glycine biosynthesis; glycine from L-serine: step 1/1. In terms of biological role, catalyzes the reversible interconversion of serine and glycine with tetrahydrofolate (THF) serving as the one-carbon carrier. This reaction serves as the major source of one-carbon groups required for the biosynthesis of purines, thymidylate, methionine, and other important biomolecules. Also exhibits THF-independent aldolase activity toward beta-hydroxyamino acids, producing glycine and aldehydes, via a retro-aldol mechanism. The sequence is that of Serine hydroxymethyltransferase from Chlamydia pneumoniae (Chlamydophila pneumoniae).